We begin with the raw amino-acid sequence, 165 residues long: Free methionine-R-sulfoxide reductase (165 aa).

Positions leucine 49 to lysine 149 constitute a GAF domain.

The protein belongs to the free Met sulfoxide reductase family.

The catalysed reaction is [thioredoxin]-disulfide + L-methionine + H2O = L-methionine (R)-S-oxide + [thioredoxin]-dithiol. Functionally, catalyzes the reversible oxidation-reduction of the R-enantiomer of free methionine sulfoxide to methionine. Specific for free L-methionine-(R)-S-oxide. The sequence is that of Free methionine-R-sulfoxide reductase (msrC) from Escherichia coli (strain K12).